We begin with the raw amino-acid sequence, 233 residues long: Triosephosphate isomerase (233 aa).

Position 8-10 (8-10 (NWK)) interacts with substrate. Catalysis depends on H91, which acts as the Electrophile. E155 acts as the Proton acceptor in catalysis. Substrate-binding residues include G161 and S192.

This sequence belongs to the triosephosphate isomerase family. In terms of assembly, homodimer.

It localises to the cytoplasm. The enzyme catalyses D-glyceraldehyde 3-phosphate = dihydroxyacetone phosphate. It functions in the pathway carbohydrate biosynthesis; gluconeogenesis. It participates in carbohydrate degradation; glycolysis; D-glyceraldehyde 3-phosphate from glycerone phosphate: step 1/1. In terms of biological role, involved in the gluconeogenesis. Catalyzes stereospecifically the conversion of dihydroxyacetone phosphate (DHAP) to D-glyceraldehyde-3-phosphate (G3P). This is Triosephosphate isomerase from Wolbachia sp. subsp. Brugia malayi (strain TRS).